Consider the following 336-residue polypeptide: MTIKVAINGYGRIGRNVLRAHYEGGKRHDIEIVAINDLGNAATNAHLTQYDTVHGRFPGEVSVDGDAFRVNGDRIRVLAQRNPAELPWGELGVDVVMECTGLFTSKEKASAHLRGGAKKVIISAPGGKDVDATIVYGVNHGVLKATDTVISNASCTTNCLAPLVKPLHEKLGLVNGLMTTVHSYTNDQVLTDVYHEDLRRARSATMSMIPTKTGAAAAVGLVMPELDGRLDGFAVRVPTINVSLVDLSFVAARPTTVEEVNGILKAAAEGELKGILDYNTAPLVSVDFNHNPASSTFDATLTKVNGTLVKVSAWYDNEWGFSNRMLDTAVALAHAR.

NAD(+) contacts are provided by residues 12 to 13, D37, R81, and S123; that span reads RI. D-glyceraldehyde 3-phosphate-binding positions include 154–156 and T185; that span reads SCT. C155 acts as the Nucleophile in catalysis. Residue N186 participates in NAD(+) binding. D-glyceraldehyde 3-phosphate is bound by residues R200, 213–214, and R236; that span reads TG. N317 contacts NAD(+).

This sequence belongs to the glyceraldehyde-3-phosphate dehydrogenase family. Homotetramer.

It carries out the reaction D-glyceraldehyde 3-phosphate + phosphate + NAD(+) = (2R)-3-phospho-glyceroyl phosphate + NADH + H(+). Its pathway is carbohydrate biosynthesis; Calvin cycle. Its function is as follows. Could be involved in carbon fixation as a component of the Calvin cycle. Catalyzes the oxidative phosphorylation of glyceraldehyde 3-phosphate (G3P) to 1,3-bisphosphoglycerate (BPG) using the cofactor NAD. The first reaction step involves the formation of a hemiacetal intermediate between G3P and a cysteine residue, and this hemiacetal intermediate is then oxidized to a thioester, with concomitant reduction of NAD to NADH. The reduced NADH is then exchanged with the second NAD, and the thioester is attacked by a nucleophilic inorganic phosphate to produce BPG. The polypeptide is Glyceraldehyde-3-phosphate dehydrogenase, chromosomal (cbbGC) (Cupriavidus necator (strain ATCC 17699 / DSM 428 / KCTC 22496 / NCIMB 10442 / H16 / Stanier 337) (Ralstonia eutropha)).